The chain runs to 264 residues: 4-hydroxy-tetrahydrodipicolinate reductase (264 aa).

10–15 provides a ligand contact to NAD(+); the sequence is GCLGRQ. NADP(+) is bound at residue Arg37. NAD(+)-binding positions include 99 to 101 and 121 to 124; these read GTT and SANL. His153 acts as the Proton donor/acceptor in catalysis. His154 serves as a coordination point for (S)-2,3,4,5-tetrahydrodipicolinate. Lys157 serves as the catalytic Proton donor. 163–164 contributes to the (S)-2,3,4,5-tetrahydrodipicolinate binding site; that stretch reads GT.

Belongs to the DapB family.

Its subcellular location is the cytoplasm. The catalysed reaction is (S)-2,3,4,5-tetrahydrodipicolinate + NAD(+) + H2O = (2S,4S)-4-hydroxy-2,3,4,5-tetrahydrodipicolinate + NADH + H(+). It carries out the reaction (S)-2,3,4,5-tetrahydrodipicolinate + NADP(+) + H2O = (2S,4S)-4-hydroxy-2,3,4,5-tetrahydrodipicolinate + NADPH + H(+). Its pathway is amino-acid biosynthesis; L-lysine biosynthesis via DAP pathway; (S)-tetrahydrodipicolinate from L-aspartate: step 4/4. Catalyzes the conversion of 4-hydroxy-tetrahydrodipicolinate (HTPA) to tetrahydrodipicolinate. In Ehrlichia ruminantium (strain Gardel), this protein is 4-hydroxy-tetrahydrodipicolinate reductase.